The chain runs to 44 residues: Thymosin beta (44 aa).

Basic and acidic residues predominate over residues 1–17; that stretch reads MSDKPDVKEVESFDKTT. The disordered stretch occupies residues 1-44; the sequence is MSDKPDVKEVESFDKTTLKKTTTNEKNTLPTKEVIEQEKSGGSD. Over residues 19-32 the composition is skewed to low complexity; it reads KKTTTNEKNTLPTK. The segment covering 33–44 has biased composition (basic and acidic residues); the sequence is EVIEQEKSGGSD.

The protein belongs to the thymosin beta family.

The protein resides in the cytoplasm. It localises to the cytoskeleton. Its function is as follows. Plays an important role in the organization of the cytoskeleton. Binds to and sequesters actin monomers (G actin) and therefore inhibits actin polymerization. The sequence is that of Thymosin beta from Gillichthys mirabilis (Long-jawed mudsucker).